The primary structure comprises 197 residues: Nucleoside triphosphate pyrophosphatase (197 aa).

Residue D71 is the Proton acceptor of the active site.

The protein belongs to the Maf family. Requires a divalent metal cation as cofactor.

Its subcellular location is the cytoplasm. It catalyses the reaction a ribonucleoside 5'-triphosphate + H2O = a ribonucleoside 5'-phosphate + diphosphate + H(+). The catalysed reaction is a 2'-deoxyribonucleoside 5'-triphosphate + H2O = a 2'-deoxyribonucleoside 5'-phosphate + diphosphate + H(+). Its function is as follows. Nucleoside triphosphate pyrophosphatase. May have a dual role in cell division arrest and in preventing the incorporation of modified nucleotides into cellular nucleic acids. The chain is Nucleoside triphosphate pyrophosphatase from Nostoc punctiforme (strain ATCC 29133 / PCC 73102).